A 685-amino-acid polypeptide reads, in one-letter code: Glycine--tRNA ligase beta subunit (685 aa).

This sequence belongs to the class-II aminoacyl-tRNA synthetase family. As to quaternary structure, tetramer of two alpha and two beta subunits.

It is found in the cytoplasm. The catalysed reaction is tRNA(Gly) + glycine + ATP = glycyl-tRNA(Gly) + AMP + diphosphate. The chain is Glycine--tRNA ligase beta subunit from Azotobacter vinelandii (strain DJ / ATCC BAA-1303).